The sequence spans 278 residues: Non-homologous end joining protein Ku (278 aa).

The 164-residue stretch at 9-172 folds into the Ku domain; sequence ISFGLVNIPV…MHFAQELVDV (164 aa). The disordered stretch occupies residues 255–278; that stretch reads NQTGAGAKKKPAKTAKRGKSRKAA. Basic residues predominate over residues 261–278; it reads AKKKPAKTAKRGKSRKAA.

The protein belongs to the prokaryotic Ku family. Homodimer. Interacts with LigD.

With LigD forms a non-homologous end joining (NHEJ) DNA repair enzyme, which repairs dsDNA breaks with reduced fidelity. Binds linear dsDNA with 5'- and 3'- overhangs but not closed circular dsDNA nor ssDNA. Recruits and stimulates the ligase activity of LigD. The protein is Non-homologous end joining protein Ku of Opitutus terrae (strain DSM 11246 / JCM 15787 / PB90-1).